Here is a 318-residue protein sequence, read N- to C-terminus: Trans-prenyltransferase (318 aa).

The helical transmembrane segment at 1–21 (MLHLIYISIIVVLIIILISYT) threads the bilayer. Positions 85, 88, and 122 each coordinate isopentenyl diphosphate. Mg(2+) contacts are provided by Asp-129 and Asp-135. Residue Arg-140 participates in dimethylallyl diphosphate binding. Residue Arg-141 coordinates isopentenyl diphosphate. Positions 216, 217, and 254 each coordinate dimethylallyl diphosphate.

It belongs to the FPP/GGPP synthase family. Asfivirus trans-prenyltransferase subfamily. Mg(2+) serves as cofactor.

The protein resides in the host endoplasmic reticulum. It localises to the host membrane. It carries out the reaction isopentenyl diphosphate + dimethylallyl diphosphate = (2E)-geranyl diphosphate + diphosphate. The catalysed reaction is isopentenyl diphosphate + (2E)-geranyl diphosphate = (2E,6E)-farnesyl diphosphate + diphosphate. The enzyme catalyses isopentenyl diphosphate + (2E,6E)-farnesyl diphosphate = (2E,6E,10E)-geranylgeranyl diphosphate + diphosphate. It catalyses the reaction isopentenyl diphosphate + (2E,6E,10E)-geranylgeranyl diphosphate = (2E,6E,10E,14E)-geranylfarnesyl diphosphate + diphosphate. It participates in isoprenoid biosynthesis; farnesyl diphosphate biosynthesis; farnesyl diphosphate from geranyl diphosphate and isopentenyl diphosphate: step 1/1. It functions in the pathway isoprenoid biosynthesis; geranyl diphosphate biosynthesis; geranyl diphosphate from dimethylallyl diphosphate and isopentenyl diphosphate: step 1/1. The protein operates within isoprenoid biosynthesis; geranylgeranyl diphosphate biosynthesis; geranylgeranyl diphosphate from farnesyl diphosphate and isopentenyl diphosphate: step 1/1. Its function is as follows. Trans-prenyltransferase that catalyzes the sequential condensation of isopentenyl diphosphate (IPP) with different allylic diphosphates, such as dimethylallyl diphosphate (DMAPP), geranyl diphosphate (GPP), farnesyl diphosphate (FPP) and geranylgeranyl diphosphate (GGPP), farnesyl diphosphate being the best allylic substrate. This chain is Trans-prenyltransferase, found in African swine fever virus (isolate Tick/Malawi/Lil 20-1/1983) (ASFV).